Reading from the N-terminus, the 231-residue chain is Probable glutathione S-transferase GSTU1 (231 aa).

The 80-residue stretch at 5-84 (KELVLLDFWV…YLDDAFPGTP (80 aa)) folds into the GST N-terminal domain. Residues Ser15, Lys42, Ile56, and 68-69 (ES) contribute to the glutathione site. One can recognise a GST C-terminal domain in the interval 97–220 (AAYARATARF…LPSPEKVYDF (124 aa)).

It belongs to the GST superfamily. Tau family.

It carries out the reaction RX + glutathione = an S-substituted glutathione + a halide anion + H(+). Its function is as follows. Conjugation of reduced glutathione to a wide number of exogenous and endogenous hydrophobic electrophiles. In Oryza sativa subsp. indica (Rice), this protein is Probable glutathione S-transferase GSTU1 (GSTU1).